Reading from the N-terminus, the 587-residue chain is Methylcrotonoyl-CoA carboxylase beta chain, mitochondrial (587 aa).

The N-terminal 26 residues, 1–26, are a transit peptide targeting the mitochondrion; it reads MLRILGRRVVSASKELTSIQQWRIRP. Positions 68–324 constitute a CoA carboxyltransferase N-terminal domain; sequence MEGILSELRS…AAKQGMEGTF (257 aa). Positions 68-579 are carboxyltransferase; sequence MEGILSELRS…SAALNRPLED (512 aa). The 247-residue stretch at 333 to 579 folds into the CoA carboxyltransferase C-terminal domain; sequence EPLYDINELR…SAALNRPLED (247 aa). Residues 367 to 396 are acyl-CoA binding; it reads EFDEFKKQYGTTLVTGFARIYGQTVGIIGN.

It belongs to the AccD/PCCB family. Probably a heterodimer composed of biotin-containing alpha subunits and beta subunits. As to expression, in roots, cotyledons, leaves, flowers, ovaries, siliques and embryos.

Its subcellular location is the mitochondrion matrix. The enzyme catalyses 3-methylbut-2-enoyl-CoA + hydrogencarbonate + ATP = 3-methyl-(2E)-glutaconyl-CoA + ADP + phosphate + H(+). The protein operates within amino-acid degradation; L-leucine degradation; (S)-3-hydroxy-3-methylglutaryl-CoA from 3-isovaleryl-CoA: step 2/3. In terms of biological role, carboxyltransferase subunit of the 3-methylcrotonyl-CoA carboxylase, an enzyme that catalyzes the conversion of 3-methylcrotonyl-CoA to 3-methylglutaconyl-CoA, a critical step for leucine and isovaleric acid catabolism. This is Methylcrotonoyl-CoA carboxylase beta chain, mitochondrial (MCCB) from Arabidopsis thaliana (Mouse-ear cress).